The primary structure comprises 207 residues: LexA repressor (207 aa).

The H-T-H motif DNA-binding region spans 28–48 (VREIGEAVGLASSFTVHGHLS). Active-site for autocatalytic cleavage activity residues include Ser-130 and Lys-168.

It belongs to the peptidase S24 family. Homodimer.

It catalyses the reaction Hydrolysis of Ala-|-Gly bond in repressor LexA.. Its function is as follows. Represses a number of genes involved in the response to DNA damage (SOS response), including recA and lexA. In the presence of single-stranded DNA, RecA interacts with LexA causing an autocatalytic cleavage which disrupts the DNA-binding part of LexA, leading to derepression of the SOS regulon and eventually DNA repair. The chain is LexA repressor from Staphylococcus aureus (strain Newman).